Here is a 1679-residue protein sequence, read N- to C-terminus: Maestro heat-like repeat-containing protein family member 2A (1679 aa).

15 HEAT repeats span residues 68-91 (ATTDPCVVMNALIRCLQMPEISTQ), 92-128 (RKMNIYNIMQEIIQQEGEMEEHCIQRLVAIASKQMRD), 190-229 (MPYMGITLATIFTMLRLANEAKMRQVICSAMETFCETVQF), 293-313 (EQVYDYIPLLLAEFQGTGHWP), 314-350 (LFPSLLQVLRQILEASVTTNTPIPPMLLHPIFTELHV), 380-417 (SYPKELMKFFFSQVEMSKEAVRVGTLALIRAVVSADDP), 422-459 (KTIYLAIRVVKNTLSDTRSKVRMAILRIIGQLVLSGFQ), 571-610 (PAPQKLLARLLVLMSSPYKGEGRGIAMLNLLRTLSQSIAP), 614-654 (DMWE…SLKK), 737-774 (KTVLNVLQDFEERIQESEQSWQIGAWRKDHPWRRETVK), 848-887 (SALTGLIVVIIKAEPPDHLVSPVRSMAMDALSQLSTMKPF), 991-1028 (GQFGVLVGLIAPCTCDAHRRTRLASINVLSSLLDLHVS), 1219-1261 (DPLM…SHGP), 1387-1425 (KLLRPVVLMLEKGAGQDKDETLQVLSLRALGNMALGAPR), and 1632-1669 (MDLVGLRNSLQDLQLDSDAGVRRAALETLKVLDSCNQH).

In Mus musculus (Mouse), this protein is Maestro heat-like repeat-containing protein family member 2A (Mroh2a).